A 222-amino-acid chain; its full sequence is Kinetochore protein Spc25 (222 aa).

Residues 51–86 (RHQRKVGKLQKVLMERREELDKRVSFIEELDRELEA) adopt a coiled-coil conformation.

This sequence belongs to the SPC25 family. Component of the Ndc80 complex, which is composed of Ndc80, Nuf2 and Spc25.

It localises to the nucleus. Its subcellular location is the chromosome. The protein resides in the centromere. It is found in the kinetochore. In terms of biological role, acts as a component of the essential kinetochore-associated Ndc80 complex, which is required for chromosome segregation and spindle checkpoint activity during meiosis and mitosis. Required for kinetochore integrity and the organization of stable microtubule binding sites in the outer plate of the kinetochore. Participates in SAC signaling that responds specifically to disruptions in spindle microtubule dynamics. The NDC80 complex synergistically enhances the affinity of the SKA1 complex for microtubules and may allow the NDC80 complex to track depolymerizing microtubules. This is Kinetochore protein Spc25 from Drosophila melanogaster (Fruit fly).